The primary structure comprises 41 residues: Large ribosomal subunit protein bL36 (41 aa).

This sequence belongs to the bacterial ribosomal protein bL36 family.

The sequence is that of Large ribosomal subunit protein bL36 from Rhizobium etli (strain CIAT 652).